Reading from the N-terminus, the 347-residue chain is D-fructose 1,6-bisphosphatase class 2/sedoheptulose 1,7-bisphosphatase (347 aa).

Positions 33, 57, 97, and 100 each coordinate Mn(2+). Residues 100–102, Tyr131, 176–178, and 198–200 contribute to the substrate site; these read EGT, RKR, and DGD. Glu225 contacts Mn(2+).

Belongs to the FBPase class 2 family. As to quaternary structure, homotetramer. Mn(2+) is required as a cofactor.

It carries out the reaction beta-D-fructose 1,6-bisphosphate + H2O = beta-D-fructose 6-phosphate + phosphate. The enzyme catalyses D-sedoheptulose 1,7-bisphosphate + H2O = D-sedoheptulose 7-phosphate + phosphate. It functions in the pathway carbohydrate biosynthesis; Calvin cycle. Its function is as follows. Catalyzes the hydrolysis of fructose 1,6-bisphosphate (Fru 1,6-P2) and sedoheptulose 1,7-bisphosphate (Sed 1,7-P2) to fructose 6-phosphate and sedoheptulose 7-phosphate, respectively. In Synechococcus sp. (strain JA-2-3B'a(2-13)) (Cyanobacteria bacterium Yellowstone B-Prime), this protein is D-fructose 1,6-bisphosphatase class 2/sedoheptulose 1,7-bisphosphatase.